The following is a 282-amino-acid chain: Shikimate dehydrogenase (NADP(+)) (282 aa).

Residues 16–18 (SLS) and threonine 63 each bind shikimate. Lysine 67 (proton acceptor) is an active-site residue. Shikimate-binding residues include asparagine 88 and aspartate 103. Residues 128–132 (GAGGA) and glycine 243 each bind NADP(+).

It belongs to the shikimate dehydrogenase family. In terms of assembly, homodimer.

The enzyme catalyses shikimate + NADP(+) = 3-dehydroshikimate + NADPH + H(+). It functions in the pathway metabolic intermediate biosynthesis; chorismate biosynthesis; chorismate from D-erythrose 4-phosphate and phosphoenolpyruvate: step 4/7. Its function is as follows. Involved in the biosynthesis of the chorismate, which leads to the biosynthesis of aromatic amino acids. Catalyzes the reversible NADPH linked reduction of 3-dehydroshikimate (DHSA) to yield shikimate (SA). The sequence is that of Shikimate dehydrogenase (NADP(+)) from Xylella fastidiosa (strain Temecula1 / ATCC 700964).